A 162-amino-acid chain; its full sequence is Phosphopantetheine adenylyltransferase (162 aa).

Substrate is bound at residue Ser9. ATP is bound by residues 9–10 (SF) and His17. Lys41, Thr73, and Arg87 together coordinate substrate. Residues 88 to 90 (GLR), Glu98, and 123 to 129 (YSFISSS) each bind ATP.

This sequence belongs to the bacterial CoaD family. In terms of assembly, homohexamer. It depends on Mg(2+) as a cofactor.

Its subcellular location is the cytoplasm. It carries out the reaction (R)-4'-phosphopantetheine + ATP + H(+) = 3'-dephospho-CoA + diphosphate. The protein operates within cofactor biosynthesis; coenzyme A biosynthesis; CoA from (R)-pantothenate: step 4/5. Reversibly transfers an adenylyl group from ATP to 4'-phosphopantetheine, yielding dephospho-CoA (dPCoA) and pyrophosphate. The polypeptide is Phosphopantetheine adenylyltransferase (Carboxydothermus hydrogenoformans (strain ATCC BAA-161 / DSM 6008 / Z-2901)).